The following is a 535-amino-acid chain: Glutamate--cysteine ligase (535 aa).

This sequence belongs to the glutamate--cysteine ligase type 1 family. Type 1 subfamily.

The catalysed reaction is L-cysteine + L-glutamate + ATP = gamma-L-glutamyl-L-cysteine + ADP + phosphate + H(+). Its pathway is sulfur metabolism; glutathione biosynthesis; glutathione from L-cysteine and L-glutamate: step 1/2. The chain is Glutamate--cysteine ligase from Pseudomonas syringae pv. syringae (strain B728a).